The sequence spans 138 residues: Cell division protein SepF (138 aa).

Positions 1 to 59 are disordered; that stretch reads MNNKFKDFFGFGDNDSYEERDAYEEHYDEQEEMQNSNRPTNSRDSNVVSIKAGQAGSGP. Polar residues predominate over residues 33-48; it reads MQNSNRPTNSRDSNVV.

This sequence belongs to the SepF family. As to quaternary structure, homodimer. Interacts with FtsZ.

The protein resides in the cytoplasm. Functionally, cell division protein that is part of the divisome complex and is recruited early to the Z-ring. Probably stimulates Z-ring formation, perhaps through the cross-linking of FtsZ protofilaments. Its function overlaps with FtsA. This Lactobacillus delbrueckii subsp. bulgaricus (strain ATCC 11842 / DSM 20081 / BCRC 10696 / JCM 1002 / NBRC 13953 / NCIMB 11778 / NCTC 12712 / WDCM 00102 / Lb 14) protein is Cell division protein SepF.